A 449-amino-acid chain; its full sequence is Tubulin alpha-1B chain (449 aa).

Q11 is a binding site for GTP. K40 is modified (N6-acetyllysine). GTP is bound by residues E71, S140, G144, T145, T179, N206, and N228. E71 contributes to the Mg(2+) binding site. Residue E254 is part of the active site.

It belongs to the tubulin family. In terms of assembly, dimer of alpha and beta chains. A typical microtubule is a hollow water-filled tube with an outer diameter of 25 nm and an inner diameter of 15 nM. Alpha-beta heterodimers associate head-to-tail to form protofilaments running lengthwise along the microtubule wall with the beta-tubulin subunit facing the microtubule plus end conferring a structural polarity. Microtubules usually have 13 protofilaments but different protofilament numbers can be found in some organisms and specialized cells. Requires Mg(2+) as cofactor. In terms of processing, acetylation of alpha chains at Lys-40 stabilizes microtubules and affects affinity and processivity of microtubule motors. This modification has a role in multiple cellular functions, ranging from cell motility, cell cycle progression or cell differentiation to intracellular trafficking and signaling.

It is found in the cytoplasm. It localises to the cytoskeleton. The protein resides in the spindle. Its subcellular location is the nucleus. It carries out the reaction GTP + H2O = GDP + phosphate + H(+). Its function is as follows. Tubulin is the major constituent of microtubules, a cylinder consisting of laterally associated linear protofilaments composed of alpha- and beta-tubulin heterodimers. Microtubules grow by the addition of GTP-tubulin dimers to the microtubule end, where a stabilizing cap forms. Below the cap, tubulin dimers are in GDP-bound state, owing to GTPase activity of alpha-tubulin. The sequence is that of Tubulin alpha-1B chain (ALTBN) from Physarum polycephalum (Slime mold).